The following is a 351-amino-acid chain: Dihydroorotate dehydrogenase (quinone) (351 aa).

FMN contacts are provided by residues 67–71 and T91; that span reads AGFDK. K71 contributes to the substrate binding site. Position 116 to 120 (116 to 120) interacts with substrate; it reads NAMGF. N145 and N178 together coordinate FMN. N178 is a substrate binding site. S181 functions as the Nucleophile in the catalytic mechanism. N183 contributes to the substrate binding site. 2 residues coordinate FMN: K214 and T242. 243 to 244 contributes to the substrate binding site; sequence NT. Residues G262, G291, and 312–313 each bind FMN; that span reads YS.

This sequence belongs to the dihydroorotate dehydrogenase family. Type 2 subfamily. As to quaternary structure, monomer. It depends on FMN as a cofactor.

It is found in the cell membrane. The enzyme catalyses (S)-dihydroorotate + a quinone = orotate + a quinol. Its pathway is pyrimidine metabolism; UMP biosynthesis via de novo pathway; orotate from (S)-dihydroorotate (quinone route): step 1/1. Functionally, catalyzes the conversion of dihydroorotate to orotate with quinone as electron acceptor. The protein is Dihydroorotate dehydrogenase (quinone) of Helicobacter pylori (strain Shi470).